Consider the following 752-residue polypeptide: Photosystem I P700 chlorophyll a apoprotein A1 (752 aa).

Transmembrane regions (helical) follow at residues 73-96, 159-182, 198-222, 294-312, 349-372, 388-414, 436-458, and 533-551; these read IFSA…FHGA, LYWT…FHYH, MNHH…HIAL, IAHH…GHMY, WHAQ…HHMY, LSLF…IFMV, AIIS…FYIH, and FMVH…LILL. [4Fe-4S] cluster-binding residues include Cys-575 and Cys-584. The next 2 helical transmembrane spans lie at 591–612 and 666–688; these read HVFL…HFSW and SSAY…MFLF. Residue His-677 participates in chlorophyll a' binding. Chlorophyll a contacts are provided by Met-685 and Tyr-693. Trp-694 is a phylloquinone binding site. Residues 726–746 form a helical membrane-spanning segment; it reads AVGLAHYLLGGIGTTWAFFLA.

The protein belongs to the PsaA/PsaB family. The PsaA/B heterodimer binds the P700 chlorophyll special pair and subsequent electron acceptors. PSI consists of a core antenna complex that captures photons, and an electron transfer chain that converts photonic excitation into a charge separation. The eukaryotic PSI reaction center is composed of at least 11 subunits. Requires P700 is a chlorophyll a/chlorophyll a' dimer, A0 is one or more chlorophyll a, A1 is one or both phylloquinones and FX is a shared 4Fe-4S iron-sulfur center. as cofactor.

It localises to the plastid. The protein localises to the chloroplast thylakoid membrane. The enzyme catalyses reduced [plastocyanin] + hnu + oxidized [2Fe-2S]-[ferredoxin] = oxidized [plastocyanin] + reduced [2Fe-2S]-[ferredoxin]. In terms of biological role, psaA and PsaB bind P700, the primary electron donor of photosystem I (PSI), as well as the electron acceptors A0, A1 and FX. PSI is a plastocyanin/cytochrome c6-ferredoxin oxidoreductase, converting photonic excitation into a charge separation, which transfers an electron from the donor P700 chlorophyll pair to the spectroscopically characterized acceptors A0, A1, FX, FA and FB in turn. Oxidized P700 is reduced on the lumenal side of the thylakoid membrane by plastocyanin or cytochrome c6. The sequence is that of Photosystem I P700 chlorophyll a apoprotein A1 from Thalassiosira pseudonana (Marine diatom).